The primary structure comprises 113 residues: Hydrogenase maturation factor HybF (113 aa).

Ni(2+)-binding residues include His-2 and Glu-3. Zn(2+)-binding residues include Cys-73, Cys-76, Cys-89, and Cys-92.

The protein belongs to the HypA/HybF family. HybF subfamily. As to quaternary structure, monomer.

Functionally, involved in the maturation of [NiFe] hydrogenases. Required for nickel insertion into the metal center of the hydrogenase. HybF is involved in maturation of hydrogenases 1 and 2. It may partially substitute for the function of HypA and vice versa. This is Hydrogenase maturation factor HybF from Escherichia coli (strain K12).